The following is a 123-amino-acid chain: Large ribosomal subunit protein bL12 (123 aa).

It belongs to the bacterial ribosomal protein bL12 family. In terms of assembly, homodimer. Part of the ribosomal stalk of the 50S ribosomal subunit. Forms a multimeric L10(L12)X complex, where L10 forms an elongated spine to which 2 to 4 L12 dimers bind in a sequential fashion. Binds GTP-bound translation factors.

Functionally, forms part of the ribosomal stalk which helps the ribosome interact with GTP-bound translation factors. Is thus essential for accurate translation. The sequence is that of Large ribosomal subunit protein bL12 from Bartonella quintana (strain Toulouse) (Rochalimaea quintana).